The primary structure comprises 322 residues: Ethylmalonyl-CoA decarboxylase (322 aa).

An N6-acetyllysine; alternate modification is found at Lys-232. Lys-232 is modified (N6-succinyllysine; alternate). Lys-316 carries the post-translational modification N6-succinyllysine.

Belongs to the enoyl-CoA hydratase/isomerase family.

It is found in the cytoplasm. It localises to the cytosol. The enzyme catalyses (2S)-ethylmalonyl-CoA + H(+) = butanoyl-CoA + CO2. The catalysed reaction is (S)-methylmalonyl-CoA + H(+) = propanoyl-CoA + CO2. It catalyses the reaction (2R)-ethylmalonyl-CoA + H(+) = butanoyl-CoA + CO2. Its function is as follows. Decarboxylates ethylmalonyl-CoA, a potentially toxic metabolite, to form butyryl-CoA, suggesting it might be involved in metabolite proofreading. Acts preferentially on (S)-ethylmalonyl-CoA but also has some activity on the (R)-isomer. Also has methylmalonyl-CoA decarboxylase activity at lower level. The chain is Ethylmalonyl-CoA decarboxylase (Echdc1) from Mus musculus (Mouse).